The primary structure comprises 267 residues: Hydroxyacylglutathione hydrolase (267 aa).

Zn(2+) is bound by residues His55, His57, Asp59, His60, His121, Asp138, and His176.

This sequence belongs to the metallo-beta-lactamase superfamily. Glyoxalase II family. In terms of assembly, monomer. It depends on Zn(2+) as a cofactor.

The enzyme catalyses an S-(2-hydroxyacyl)glutathione + H2O = a 2-hydroxy carboxylate + glutathione + H(+). It functions in the pathway secondary metabolite metabolism; methylglyoxal degradation; (R)-lactate from methylglyoxal: step 2/2. In terms of biological role, thiolesterase that catalyzes the hydrolysis of S-D-lactoyl-glutathione to form glutathione and D-lactic acid. This is Hydroxyacylglutathione hydrolase from Shewanella oneidensis (strain ATCC 700550 / JCM 31522 / CIP 106686 / LMG 19005 / NCIMB 14063 / MR-1).